A 296-amino-acid polypeptide reads, in one-letter code: MSLIKKPGGKTIEVVKNLPRITLANLRPNPGAKTLEKRRGRGMHGGNRSGWGHKGERQRCNRPRLGFEGGQTPFYLVIPKYGYNANHSRQPQYPPLSLRRLQYLIDLGRIDPSQPIDLTQLVNGRGVEIQPQKRDYGVQLVDEGADIFCAKVNLEVQAASEKAIAAVERNGGVITTSYYDPRSLQILIKPVPFFMPGEPIPKRLFPGEDLLPYYTDANNRGYLADPDKIQTARMDLAKKYGYSIPDISKDTLFEMLVQRKNPRHIFFGLSPGWVVNMADKKILKPTDDKVLQYYGS.

A mitochondrion-targeting transit peptide spans 1–20 (MSLIKKPGGKTIEVVKNLPR). The tract at residues 25–59 (NLRPNPGAKTLEKRRGRGMHGGNRSGWGHKGERQR) is disordered.

This sequence belongs to the universal ribosomal protein uL15 family. In terms of assembly, component of the mitochondrial ribosome large subunit (39S) which comprises a 16S rRNA and about 50 distinct proteins.

The protein localises to the mitochondrion. The chain is Large ribosomal subunit protein uL15m (mrpl15) from Danio rerio (Zebrafish).